The primary structure comprises 835 residues: Protein translocase subunit SecA 1 (835 aa).

ATP-binding positions include Gln-85, 103-107, and Asp-492; that span reads GEGKT. A disordered region spans residues 788–807; sequence VQGEAVHPSSDGEEAKKKPV. 4 residues coordinate Zn(2+): Cys-819, Cys-821, Cys-830, and Cys-831.

The protein belongs to the SecA family. In terms of assembly, monomer and homodimer. Part of the essential Sec protein translocation apparatus which comprises SecA, SecYEG and auxiliary proteins SecDF. Other proteins may also be involved. Requires Zn(2+) as cofactor.

Its subcellular location is the cell membrane. The protein localises to the cytoplasm. The catalysed reaction is ATP + H2O + cellular proteinSide 1 = ADP + phosphate + cellular proteinSide 2.. Its function is as follows. Part of the Sec protein translocase complex. Interacts with the SecYEG preprotein conducting channel. Has a central role in coupling the hydrolysis of ATP to the transfer of proteins into and across the cell membrane, serving as an ATP-driven molecular motor driving the stepwise translocation of polypeptide chains across the membrane. This chain is Protein translocase subunit SecA 1, found in Bacillus anthracis.